The primary structure comprises 379 residues: Lipoyl synthase, mitochondrial (379 aa).

The [4Fe-4S] cluster site is built by cysteine 106, cysteine 111, cysteine 117, cysteine 137, cysteine 141, cysteine 144, and serine 352. The Radical SAM core domain occupies glutamate 122–leucine 341.

The protein belongs to the radical SAM superfamily. Lipoyl synthase family. The cofactor is [4Fe-4S] cluster.

It localises to the mitochondrion. It carries out the reaction [[Fe-S] cluster scaffold protein carrying a second [4Fe-4S](2+) cluster] + N(6)-octanoyl-L-lysyl-[protein] + 2 oxidized [2Fe-2S]-[ferredoxin] + 2 S-adenosyl-L-methionine + 4 H(+) = [[Fe-S] cluster scaffold protein] + N(6)-[(R)-dihydrolipoyl]-L-lysyl-[protein] + 4 Fe(3+) + 2 hydrogen sulfide + 2 5'-deoxyadenosine + 2 L-methionine + 2 reduced [2Fe-2S]-[ferredoxin]. It participates in protein modification; protein lipoylation via endogenous pathway; protein N(6)-(lipoyl)lysine from octanoyl-[acyl-carrier-protein]: step 2/2. In terms of biological role, catalyzes the radical-mediated insertion of two sulfur atoms into the C-6 and C-8 positions of the octanoyl moiety bound to the lipoyl domains of lipoate-dependent enzymes, thereby converting the octanoylated domains into lipoylated derivatives. The sequence is that of Lipoyl synthase, mitochondrial from Drosophila erecta (Fruit fly).